The primary structure comprises 65 residues: Large ribosomal subunit protein bL35 (65 aa).

The disordered stretch occupies residues 1-29 (MPKMKTNRGAAKRFKKTGSGRIKRGKAFT). A compositionally biased stretch (basic residues) spans 10 to 26 (AAKRFKKTGSGRIKRGK).

It belongs to the bacterial ribosomal protein bL35 family.

The sequence is that of Large ribosomal subunit protein bL35 from Desulfotalea psychrophila (strain LSv54 / DSM 12343).